Here is a 431-residue protein sequence, read N- to C-terminus: MDNLQSIKAQFIAQINAYQPEKDRDIVVFQCNTETTFSLLAWLKAQQYYPQFYLHGRDGATKWASIGQVRQFSDVSAAAHFIQEQQLALLGGLQFYGDALFVLPRLLLQQRQDGMTITLFIDGKQFEQDKLVALACLSTFEKQTALQTVKQEISLISQKADQAEWCRWVEQGLQKIKQGELSKIVLANERCFKTAAPLAATDLLAESEKYNLGCYHFMLAESEQRAFIGSSPELLYRRHGLQLKTEALAGTAFMGEDEQQNQQQSDWLLHDKKNEYENQLVVDGICQNLQPFVQQITIEKVELKKLRKVQHLRRRISAQLKAGCGDKDILLAMHPTAAVAGLPQLEAKQALRKLENFDRTWYAGTLGVMGPAYADFCVTIRSAFIEQAENDSQLCVFAGAGIVEGSIPLLEWREIERKAMGLVSLLQQNQL.

Lys-183 serves as the catalytic Proton acceptor. Catalysis depends on Glu-233, which acts as the Proton donor. Glu-277 and Glu-414 together coordinate Mg(2+).

This sequence belongs to the isochorismate synthase family. It depends on Mg(2+) as a cofactor.

The catalysed reaction is chorismate = isochorismate. It participates in quinol/quinone metabolism; 1,4-dihydroxy-2-naphthoate biosynthesis; 1,4-dihydroxy-2-naphthoate from chorismate: step 1/7. Its pathway is quinol/quinone metabolism; menaquinone biosynthesis. In terms of biological role, catalyzes the conversion of chorismate to isochorismate. The polypeptide is Isochorismate synthase MenF (Pasteurella multocida (strain Pm70)).